A 747-amino-acid chain; its full sequence is Sushi domain-containing protein 1 (747 aa).

The N-terminal stretch at 1–29 (MGRGPWDAGPSRRLLPLLLLLGLARGAAG) is a signal peptide. At 30–721 (APGPDGLDVC…WAQVKDSSLM (692 aa)) the chain is on the extracellular side. The region spanning 35 to 72 (GLDVCATCHEHATCQQREGKKICICNYGFVGNGRTQCV) is the EGF-like 1 domain. 5 disulfide bridges follow: Cys-39–Cys-48, Cys-42–Cys-57, Cys-59–Cys-71, Cys-77–Cys-91, and Cys-85–Cys-100. The region spanning 73-112 (DKNECQFGATLVCGNHTSCHNTPGGFYCICLEGYRATNNN) is the EGF-like 2; calcium-binding domain. Residues Asn-87 and Asn-112 are each glycosylated (N-linked (GlcNAc...) asparagine). The 38-residue stretch at 125 to 162 (DIDECEVSGLCRHGGRCVNTHGSFECYCMDGYLPRNGP) folds into the EGF-like 3; calcium-binding domain. Cystine bridges form between Cys-129–Cys-141, Cys-135–Cys-150, Cys-179–Cys-221, Cys-206–Cys-234, Cys-239–Cys-281, and Cys-266–Cys-294. 2 Sushi domains span residues 177–236 (IDCG…HCQE) and 237–296 (INCG…TCTE). Asn-193 carries an N-linked (GlcNAc...) asparagine glycan. The N-linked (GlcNAc...) asparagine glycan is linked to Asn-253. N-linked (GlcNAc...) asparagine glycosylation is found at Asn-348, Asn-367, and Asn-563. A helical transmembrane segment spans residues 722–742 (LLQMAGVGLGSLAVVIILTFL). At 743–747 (SFSAV) the chain is on the cytoplasmic side.

It localises to the membrane. The sequence is that of Sushi domain-containing protein 1 (SUSD1) from Homo sapiens (Human).